Consider the following 42-residue polypeptide: Photosystem I reaction center subunit IX (42 aa).

A helical transmembrane segment spans residues 7 to 27 (YLSVAPVLSTLWFVALAGLLI).

This sequence belongs to the PsaJ family.

It localises to the plastid. It is found in the chloroplast thylakoid membrane. Its function is as follows. May help in the organization of the PsaE and PsaF subunits. The sequence is that of Photosystem I reaction center subunit IX from Atropa belladonna (Belladonna).